Reading from the N-terminus, the 328-residue chain is Formimidoylglutamase (328 aa).

Histidine 133, aspartate 159, histidine 161, aspartate 163, aspartate 253, and aspartate 255 together coordinate Mn(2+).

The protein belongs to the arginase family. Requires Mn(2+) as cofactor.

It carries out the reaction N-formimidoyl-L-glutamate + H2O = formamide + L-glutamate. Its pathway is amino-acid degradation; L-histidine degradation into L-glutamate; L-glutamate from N-formimidoyl-L-glutamate (hydrolase route): step 1/1. Its function is as follows. Catalyzes the conversion of N-formimidoyl-L-glutamate to L-glutamate and formamide. This is Formimidoylglutamase from Streptococcus pyogenes serotype M5 (strain Manfredo).